Reading from the N-terminus, the 290-residue chain is Protease HtpX homolog (290 aa).

Transmembrane regions (helical) follow at residues 4 to 24 (ILLF…VASL) and 39 to 59 (TALL…SLLI). H144 contributes to the Zn(2+) binding site. Residue E145 is part of the active site. H148 is a binding site for Zn(2+). The next 2 membrane-spanning stretches (helical) occupy residues 159–179 (LIQG…GYAV) and 199–219 (VSTI…VAWF). E224 provides a ligand contact to Zn(2+).

This sequence belongs to the peptidase M48B family. Zn(2+) serves as cofactor.

It localises to the cell inner membrane. The chain is Protease HtpX homolog from Variovorax paradoxus (strain S110).